Reading from the N-terminus, the 937-residue chain is Hyphally-regulated protein (937 aa).

Residues 1 to 20 (MKVVSNFIFTILLTLNLSAA) form the signal peptide. A glycan (N-linked (GlcNAc...) asparagine) is linked at Asn-16. A helical transmembrane segment spans residues 42-62 (VHSGATWAILGTTLCSFFGGL). Residue Asn-236 is glycosylated (N-linked (GlcNAc...) asparagine). The segment at 332–483 (SAPESESDLN…QSITSSPGQS (152 aa)) is disordered. Residues 344–392 (TTSSIETSSYSSAATESSVVSESSSAVDSLTSSSLSSKSESSDVVSSTT) are compositionally biased toward low complexity. Over residues 393-414 (NIESSSTAIETTMNSESSTDAG) the composition is skewed to polar residues. Residues 415 to 475 (SSSISQSESS…SNALSSTEQS (61 aa)) are compositionally biased toward low complexity. Asn-449, Asn-488, Asn-580, Asn-585, Asn-595, and Asn-603 each carry an N-linked (GlcNAc...) asparagine glycan. Positions 567–590 (DATTTTTTSTGGDNSTGGNESGSN) are enriched in low complexity. The interval 567–857 (DATTTTTTST…VANPVTTSTE (291 aa)) is disordered. The span at 591–609 (HGPGNGSTEGSGNGSGAGS) shows a compositional bias: gly residues. Copy 1 of the repeat occupies 610–613 (NEGS). The tract at residues 610–753 (NEGSQSGPNN…GAGNGSNEGS (144 aa)) is 7 X 4 AA repeats of N-E-G-S. N-linked (GlcNAc...) asparagine glycosylation is found at Asn-619, Asn-631, Asn-641, and Asn-649. Gly residues-rich tracts occupy residues 619–631 (NGSG…GSNN) and 641–665 (NGSG…GSGS). A run of 4 repeats spans residues 666–669 (NEGS), 680–683 (NEGS), 690–693 (NEGS), and 698–701 (NEGS). Residues 666-682 (NEGSQSGSGSQPGPNEG) are compositionally biased toward low complexity. The span at 699-725 (EGSGSGSGSGSNNGSGSGSQSGSGSGS) shows a compositional bias: gly residues. The N-linked (GlcNAc...) asparagine glycan is linked to Asn-711. A compositionally biased stretch (low complexity) spans 726–742 (QSGSESGSNSGSNEGSN). Residues 738–741 (NEGS) form repeat 6. Over residues 743–801 (PGAGNGSNEGSGQGSGNGSEAGSGQGSGPNNGSGSGHNDGSGSGSNQGSNPGAGSGSGS) the composition is skewed to gly residues. N-linked (GlcNAc...) asparagine glycosylation occurs at Asn-747. Repeat 7 spans residues 750 to 753 (NEGS). 2 N-linked (GlcNAc...) asparagine glycosylation sites follow: Asn-759 and Asn-773. Over residues 802 to 814 (ESGSKAGSHSGSN) the composition is skewed to low complexity. Positions 817–829 (AKTDSIEGFHTES) are enriched in basic and acidic residues. A compositionally biased stretch (polar residues) spans 841-851 (ATVTGNSVANP). N-linked (GlcNAc...) asparagine glycosylation is found at Asn-897 and Asn-913. Residue Asn-913 is the site of GPI-anchor amidated asparagine attachment. The propeptide at 914 to 937 (GSSIVTGGKSILFGLIVSMVVLFM) is removed in mature form.

The protein localises to the cell membrane. The protein resides in the secreted. It is found in the cell wall. Its function is as follows. Nonessential component of the hyphal cell wall. This chain is Hyphally-regulated protein (HYR1), found in Candida albicans (Yeast).